The chain runs to 152 residues: Acidic phospholipase A2 (152 aa).

The first 21 residues, 1–21 (MNPAHLLVLSAVCVSLLGASS), serve as a signal peptide directing secretion. Positions 22-27 (IPPQPL) are excised as a propeptide. Cystine bridges form between C38–C104, C54–C151, C56–C72, C71–C132, C78–C125, C88–C118, and C111–C123. Ca(2+) is bound by residues Y55, G57, and G59. H75 is an active-site residue. D76 serves as a coordination point for Ca(2+). Residue D126 is part of the active site.

This sequence belongs to the phospholipase A2 family. Group I subfamily. D49 sub-subfamily. It depends on Ca(2+) as a cofactor. Expressed by the venom gland.

It localises to the secreted. The enzyme catalyses a 1,2-diacyl-sn-glycero-3-phosphocholine + H2O = a 1-acyl-sn-glycero-3-phosphocholine + a fatty acid + H(+). In terms of biological role, PLA2 catalyzes the calcium-dependent hydrolysis of the 2-acyl groups in 3-sn-phosphoglycerides. In Ophiophagus hannah (King cobra), this protein is Acidic phospholipase A2.